A 493-amino-acid polypeptide reads, in one-letter code: ATP synthase subunit beta, chloroplastic (493 aa).

Residue 170-177 coordinates ATP; it reads GGAGVGKT.

The protein belongs to the ATPase alpha/beta chains family. As to quaternary structure, F-type ATPases have 2 components, CF(1) - the catalytic core - and CF(0) - the membrane proton channel. CF(1) has five subunits: alpha(3), beta(3), gamma(1), delta(1), epsilon(1). CF(0) has four main subunits: a(1), b(1), b'(1) and c(9-12).

The protein localises to the plastid. It localises to the chloroplast thylakoid membrane. It catalyses the reaction ATP + H2O + 4 H(+)(in) = ADP + phosphate + 5 H(+)(out). Its function is as follows. Produces ATP from ADP in the presence of a proton gradient across the membrane. The catalytic sites are hosted primarily by the beta subunits. This is ATP synthase subunit beta, chloroplastic from Adiantum capillus-veneris (Maidenhair fern).